The sequence spans 136 residues: MGDKTKVQVSKLKPGRYILIDGEPCRIGNITVSSPGKHGSAKARIEAVGIFDGKVRSIVKPTSAEVDVPIIDKRTAQIIAMTPDTVQIMDMETYELYDVPIETGVADEIKGQLKEGINVEYWETLGRIKIMKIKGE.

Lys37 is subject to Hypusine.

The protein belongs to the eIF-5A family.

The protein resides in the cytoplasm. Its function is as follows. Functions by promoting the formation of the first peptide bond. The chain is Translation initiation factor 5A (eIF5A) from Thermococcus onnurineus (strain NA1).